A 172-amino-acid chain; its full sequence is Propanediol dehydratase small subunit (172 aa).

It belongs to the diol/glycerol dehydratase small subunit family. The propanediol dehydratase enzyme is a heterotrimeric complex composed of a large (PduC), a medium (PduD) and a small (PduE) subunit. Adenosylcob(III)alamin serves as cofactor.

It is found in the bacterial microcompartment. The catalysed reaction is propane-1,2-diol = propanal + H2O. Its pathway is polyol metabolism; 1,2-propanediol degradation. Its function is as follows. Part of the PduCDE complex that catalyzes the dehydration of 1,2-propanediol (1,2-PD) to propionaldehyde. Localized in the bacterial microcompartment (BMC) dedicated to 1,2-PD degradation. Expression of a cosmid containing the full 21-gene pdu operon in E.coli allows E.coli to grow on 1,2-propanediol (1,2-PD) with the appearance of BMCs in its cytoplasm. In terms of biological role, the 1,2-PD-specific bacterial microcompartment (BMC) concentrates low levels of 1,2-PD catabolic enzymes, concentrates volatile reaction intermediates thus enhancing pathway flux and keeps the level of toxic, mutagenic propionaldehyde low. This is Propanediol dehydratase small subunit from Citrobacter freundii.